The primary structure comprises 207 residues: Thymidylate kinase (207 aa).

12 to 19 (GVDGAGKS) is a binding site for ATP.

The protein belongs to the thymidylate kinase family.

It carries out the reaction dTMP + ATP = dTDP + ADP. Phosphorylation of dTMP to form dTDP in both de novo and salvage pathways of dTTP synthesis. The sequence is that of Thymidylate kinase from Bordetella petrii (strain ATCC BAA-461 / DSM 12804 / CCUG 43448).